The sequence spans 531 residues: Peptide chain release factor 3 (531 aa).

Residues A13 to K282 enclose the tr-type G domain. GTP is bound by residues S22–T29, D90–H94, and N144–D147.

Belongs to the TRAFAC class translation factor GTPase superfamily. Classic translation factor GTPase family. PrfC subfamily.

Its subcellular location is the cytoplasm. In terms of biological role, increases the formation of ribosomal termination complexes and stimulates activities of RF-1 and RF-2. It binds guanine nucleotides and has strong preference for UGA stop codons. It may interact directly with the ribosome. The stimulation of RF-1 and RF-2 is significantly reduced by GTP and GDP, but not by GMP. The sequence is that of Peptide chain release factor 3 from Psychrobacter sp. (strain PRwf-1).